Here is a 223-residue protein sequence, read N- to C-terminus: Coiled-coil domain-containing protein 124 (223 aa).

Residues 1-126 (MPKKFQGENT…AEKAKSHLEV (126 aa)) form a disordered region. Residues 15–82 (ARARRAEAKA…LLEEEDSKLK (68 aa)) adopt a coiled-coil conformation. Basic and acidic residues-rich tracts occupy residues 18-74 (RRAE…QRLL) and 99-126 (QIED…HLEV). A phosphoserine mark is found at S141 and S194. The tract at residues 204-223 (WLRSPDNPMNQRAVPFNAPK) is disordered.

Belongs to the CCDC124 family. In terms of assembly, associates with translationally inactive ribosomes in the nonrotated state. Interacts with RASGEF1B. Ubiquitously expressed.

It localises to the cytoplasm. Its subcellular location is the cytoskeleton. It is found in the microtubule organizing center. The protein resides in the centrosome. The protein localises to the midbody. In terms of biological role, ribosome-binding protein involved in ribosome hibernation: associates with translationally inactive ribosomes and stabilizes the nonrotated conformation of the 80S ribosome, thereby promoting ribosome preservation and storage. Also required for proper progression of late cytokinetic stages. The polypeptide is Coiled-coil domain-containing protein 124 (Homo sapiens (Human)).